Here is a 470-residue protein sequence, read N- to C-terminus: Sulfate adenylyltransferase subunit 1 (470 aa).

The region spanning 22 to 236 (KELLRFITCG…YLETIKIDYA (215 aa)) is the tr-type G domain. The G1 stretch occupies residues 31-38 (GSVDDGKS). 31–38 (GSVDDGKS) serves as a coordination point for GTP. Residues 89 to 93 (GITID) form a G2 region. The tract at residues 110-113 (DTPG) is G3. Residues 110–114 (DTPGH) and 165–168 (NKMD) each bind GTP. The tract at residues 165-168 (NKMD) is G4. The segment at 202-204 (SAL) is G5.

Belongs to the TRAFAC class translation factor GTPase superfamily. Classic translation factor GTPase family. CysN/NodQ subfamily. As to quaternary structure, heterodimer composed of CysD, the smaller subunit, and CysN.

The catalysed reaction is sulfate + ATP + H(+) = adenosine 5'-phosphosulfate + diphosphate. Its pathway is sulfur metabolism; hydrogen sulfide biosynthesis; sulfite from sulfate: step 1/3. With CysD forms the ATP sulfurylase (ATPS) that catalyzes the adenylation of sulfate producing adenosine 5'-phosphosulfate (APS) and diphosphate, the first enzymatic step in sulfur assimilation pathway. APS synthesis involves the formation of a high-energy phosphoric-sulfuric acid anhydride bond driven by GTP hydrolysis by CysN coupled to ATP hydrolysis by CysD. The protein is Sulfate adenylyltransferase subunit 1 of Francisella tularensis subsp. novicida (strain U112).